The chain runs to 97 residues: Lipolysis-activating peptide 1-alpha chain (97 aa).

The N-terminal stretch at 1–21 (MNITLFCSVFILISLAGLSVS) is a signal peptide. One can recognise an LCN-type CS-alpha/beta domain in the interval 25–88 (PGNYPMSLYG…FWAAHKNHCK (64 aa)). 3 disulfides stabilise this stretch: Cys39–Cys62, Cys48–Cys67, and Cys52–Cys69.

It belongs to the long (3 C-C) scorpion toxin superfamily. In terms of assembly, monomer (edited version) and heterodimer (non-edited version) of this alpha chain and a beta chain (AC D9U2A2). Expressed by the venom gland.

The protein localises to the secreted. In terms of biological role, the heterodimer non-edited LVP1 induces lipolysis in rat adipocytes. Induction of lipolysis by LVP1 appears to be mediated through the beta-2 adrenergic receptor pathway (ADRB2). Functionally, the edited BmKBTx-like, similar to beta-toxins, may modulate voltage-gated sodium channels (Nav) and may block voltage-gated potassium channels (Kv). This Lychas mucronatus (Chinese swimming scorpion) protein is Lipolysis-activating peptide 1-alpha chain.